A 218-amino-acid chain; its full sequence is Ribose-5-phosphate isomerase A (218 aa).

Substrate contacts are provided by residues 28-31, 81-84, and 94-97; these read TGST, DGAD, and KGGG. The active-site Proton acceptor is Glu103. Substrate is bound at residue Lys121.

This sequence belongs to the ribose 5-phosphate isomerase family. In terms of assembly, homodimer.

It carries out the reaction aldehydo-D-ribose 5-phosphate = D-ribulose 5-phosphate. The protein operates within carbohydrate degradation; pentose phosphate pathway; D-ribose 5-phosphate from D-ribulose 5-phosphate (non-oxidative stage): step 1/1. In terms of biological role, catalyzes the reversible conversion of ribose-5-phosphate to ribulose 5-phosphate. The sequence is that of Ribose-5-phosphate isomerase A from Aliivibrio salmonicida (strain LFI1238) (Vibrio salmonicida (strain LFI1238)).